A 195-amino-acid chain; its full sequence is MAFALLRPVGAHVLYPDVRLLSEDEENRSESDASDQSFGCCEGLEAARRGPGPGSGRRASNGAGPVVVVRQRQAANARERDRTQSVNTAFTALRTLIPTEPVDRKLSKIETLRLASSYIAHLANVLLLGDAADDGQPCFRAAGGGKSAVPAADGRQPRSICTFCLSNQRKGGSRRDLGGSCLKVRGVAPLRGPRR.

The disordered stretch occupies residues 44–65 (LEAARRGPGPGSGRRASNGAGP). The span at 56–65 (GRRASNGAGP) shows a compositional bias: low complexity. At serine 60 the chain carries Phosphoserine. Residues 70–122 (RQRQAANARERDRTQSVNTAFTALRTLIPTEPVDRKLSKIETLRLASSYIAHL) enclose the bHLH domain.

In terms of assembly, heterodimer; efficient DNA binding requires dimerization with another bHLH protein, such as TCF3/E12. Interacts with MEOX2. Expressed in heart and skeletal muscle. Specifically expressed in a subpopulation of embryonic stem cells (ESCs), that are still undifferentiated but primed for ifferentiation. Expressed in hematopoietic stem cells (HSCs).

It localises to the nucleus. Functionally, early transcription factor that plays a key role in somitogenesis, paraxial mesoderm development and regulation of stem cell pluripotency. Essential for the mesenchymal to epithelial transition associated with somite formation. Required for somite morphogenesis, thereby regulating patterning of the axial skeleton and skeletal muscles. Required for proper localization of somite epithelium markers during the mesenchymal to epithelial transition. Also plays a key role in regulation of stem cell pluripotency. Promotes pluripotency exit of embryonic stem cells (ESCs) by priming ESCs for differentiation. Acts as a key regulator of self-renewal of hematopoietic stem cells (HSCs) by mediating HSCs quiescence and long-term self-renewal. Together with MEOX2, regulates transcription in heart endothelial cells to regulate fatty acid transport across heart endothelial cells. Acts by forming a heterodimer with another helix-loop-helix (bHLH) protein, such as TCF3/E12, that binds DNA on E-box motifs (5'-CANNTG-3') and activates transcription of target genes. In Mus musculus (Mouse), this protein is Transcription factor 15.